The sequence spans 657 residues: MGELLAGRPRPLGSHFDGEGVNFALFSSGASRVELCIFDGLREQRLPLTARTGDIWHGYLPDAQPGLCYGYRVDGAFDPSRGQRFNANKLLLDPCARQMDGWVVDDQRLHGGYHQPDPSDSAEVMPPSVVVDEHYDWQGDRLPRTPWSQTVLYEAHVRGLTRRHPGIPAAIRGTYAALAHPVMLDYLTQLGVTALELMPVQQHADEPRLQSMGLRNYWGYNTLLPFAVDNSLAASDDPLNEFRDTVRALHQAGIEVILDVVFNHSAELDVDGPTLTLRGIDNASYYWLTENGDYHNWAGCGNVLRLEHPAVLHWVIECLTFWHEVCHVDGFRFDLATILGRLPDFSSSAPFFTALRNHRSLRDCKLIAEPWDISPGGYQLGQFPAPFAEWNDRFRDDMRRFWLHGDLPIGVLARRFAASSEVFERGSRQPWASVNMLTSHDGFTLRDLVCFNHKHNDANGEQNRDGTNSNFSFNHGTEGLEADETTQARRRVSQQALLTTLLLSQGTPMLLAGDEFGNSQQGNNNAYCQDNALAWLHWDQADDALLAFTSGLIRLRRSIPALQRGRWWRDDDEDDVRWLNAQGEALTPYEWEQGTHQLQIQLSERWLLLVNATPQVSDFSLPEGEWRVAPPFSATDHLLDGQTWRGQANAVCVLVKQ.

Asp334 (nucleophile) is an active-site residue. Catalysis depends on Glu369, which acts as the Proton donor. The tract at residues 458–485 is disordered; the sequence is ANGEQNRDGTNSNFSFNHGTEGLEADET. The span at 465-475 shows a compositional bias: polar residues; it reads DGTNSNFSFNH.

This sequence belongs to the glycosyl hydrolase 13 family.

It is found in the cytoplasm. The catalysed reaction is Hydrolysis of (1-&gt;6)-alpha-D-glucosidic linkages to branches with degrees of polymerization of three or four glucose residues in limit dextrin.. Its pathway is glycan degradation; glycogen degradation. Slightly activated by Ca(2+). Inhibited by divalent cations such as Zn(2+), Cu(2+), Fe(2+), Mg(2+), Mn(2+), but only slightly inhibited by EDTA. Functionally, removes maltotriose and maltotetraose chains that are attached by 1,6-alpha-linkage to the limit dextrin main chain, generating a debranched limit dextrin. Hydrolyzes the alpha-1,6-glycosidic linkages in amylopectin while does not hydrolyze the alpha-1,4-glycosidic linkages in amylose. Native glycogen is a poor substrate. In Dickeya chrysanthemi (Pectobacterium chrysanthemi), this protein is Glycogen debranching enzyme.